The chain runs to 250 residues: MDRDEIVSFLDEFLNISAYPDKSKNGLQVEGKEEVNTIAFAVDASLDTILKAKVFNADMLIVHHGIIWGGISYVRGLIAKRLKELLVAGINLYAVHLPLDAHPEVGNNVQLLKLLNLEAKEPFGEYHGVKIGYIGEFDEPKPLPLIAQILAEKLPAEYVKSYEFGLQEVKRIAVVSGGGGFAIEEASRKADLLITGEITHEDYRVAEDLRVSVIAAGHYATETLGVKALMGVLKEKFGVKTVFIDNPTGL.

A divalent metal cation-binding residues include His-63, His-64, Asp-100, His-218, and Glu-222.

Belongs to the GTP cyclohydrolase I type 2/NIF3 family. In terms of assembly, homohexamer.

This Pyrococcus horikoshii (strain ATCC 700860 / DSM 12428 / JCM 9974 / NBRC 100139 / OT-3) protein is GTP cyclohydrolase 1 type 2 homolog.